Here is a 237-residue protein sequence, read N- to C-terminus: Eukaryotic translation initiation factor 4E-1 (237 aa).

Residues 1–61 are disordered; it reads MVVEDTQKSV…KPPAALARNP (61 aa). The segment covering 25–44 has biased composition (acidic residues); the sequence is NNDDDDDDLEEGEIPVDGED. Positions 47 to 58 are enriched in low complexity; it reads ATATTKPPAALA. EIF4G-binding regions lie at residues 62–65 and 72–108; these read HPLE and FDNPSSKSKQAAWGSSIRPIYTFATVEEFWSIYNNIH. MRNA is bound by residues 80-85, Lys112, and 130-131; these read KQAAWG and WE. Cys135 and Cys173 form a disulfide bridge. The segment at 156-165 is EIF4G-binding; the sequence is YTLLAMIGEQ. MRNA contacts are provided by residues 180-185 and 225-229; these read RSRQDK and KKLDR.

This sequence belongs to the eukaryotic initiation factor 4E family. EIF4F is a multi-subunit complex, the composition of which varies with external and internal environmental conditions. It is composed of at least EIF4A, EIF4E and EIF4G. EIF4E is also known to interact with other partners. In higher plants two isoforms of EIF4F have been identified, named isoform EIF4F and isoform EIF(iso)4F. Isoform EIF4F has subunits p220 and p26, whereas isoform EIF(iso)4F has subunits p82 and p28. As to quaternary structure, (Microbial infection) Interacts with potyvirus viral genome-linked protein (VPg) in the nucleus; this interaction is possible in susceptible hosts but is impaired in resistant plants. Binds to soybean mosaic virus (SMV) VPg in the nucleus. Interacts with SMV nuclear inclusion protein A (NIa-Pro) and nuclear inclusion protein B (NIb) in the cytoplasm. Post-translationally, according to the redox status, the Cys-135-Cys-173 disulfide bridge may have a role in regulating protein function by affecting its ability to bind capped mRNA. Mostly expressed in roots, flowers, immature pods and mature seeds, and, to a lower extent, in stems and leaves.

It is found in the nucleus. It localises to the cytoplasm. Its function is as follows. Component of the protein complex eIF4F, which is involved in the recognition of the mRNA cap, ATP-dependent unwinding of 5'-terminal secondary structure and recruitment of mRNA to the ribosome. Recognizes and binds the 7-methylguanosine-containing mRNA cap during an early step in the initiation of protein synthesis and facilitates ribosome binding by inducing the unwinding of the mRNAs secondary structures. Key component of recessive resistance to potyviruses (e.g. soybean mosaic virus (SMV), bean common mosaic virus (BCMV) and watermelon mosaic virus (WMV), but not bean pod mottle virus (BPMV)). In terms of biological role, (Microbial infection) Susceptibility host factor required for viral infection by recruiting viral RNAs to the host ribosomal complex via an interaction with viral genome-linked protein (VPg). In Glycine max (Soybean), this protein is Eukaryotic translation initiation factor 4E-1.